Here is a 152-residue protein sequence, read N- to C-terminus: SsrA-binding protein (152 aa).

This sequence belongs to the SmpB family.

Its subcellular location is the cytoplasm. Its function is as follows. Required for rescue of stalled ribosomes mediated by trans-translation. Binds to transfer-messenger RNA (tmRNA), required for stable association of tmRNA with ribosomes. tmRNA and SmpB together mimic tRNA shape, replacing the anticodon stem-loop with SmpB. tmRNA is encoded by the ssrA gene; the 2 termini fold to resemble tRNA(Ala) and it encodes a 'tag peptide', a short internal open reading frame. During trans-translation Ala-aminoacylated tmRNA acts like a tRNA, entering the A-site of stalled ribosomes, displacing the stalled mRNA. The ribosome then switches to translate the ORF on the tmRNA; the nascent peptide is terminated with the 'tag peptide' encoded by the tmRNA and targeted for degradation. The ribosome is freed to recommence translation, which seems to be the essential function of trans-translation. In Rickettsia prowazekii (strain Madrid E), this protein is SsrA-binding protein.